A 253-amino-acid chain; its full sequence is Large ribosomal subunit protein uL1m (253 aa).

The transit peptide at 1 to 81 directs the protein to the mitochondrion; it reads MSSLIALGKR…SIALKSNRRA (81 aa).

The protein belongs to the universal ribosomal protein uL1 family. Component of the mitochondrial large ribosomal subunit (mt-LSU). Mature yeast 74S mitochondrial ribosomes consist of a small (37S) and a large (54S) subunit. The 37S small subunit contains a 15S ribosomal RNA (15S mt-rRNA) and at least 32 different proteins. The 54S large subunit contains a 21S rRNA (21S mt-rRNA) and at least 45 different proteins.

Its subcellular location is the mitochondrion. Its function is as follows. Component of the mitochondrial ribosome (mitoribosome), a dedicated translation machinery responsible for the synthesis of mitochondrial genome-encoded proteins, including at least some of the essential transmembrane subunits of the mitochondrial respiratory chain. The mitoribosomes are attached to the mitochondrial inner membrane and translation products are cotranslationally integrated into the membrane. This chain is Large ribosomal subunit protein uL1m (mrpl1), found in Schizosaccharomyces pombe (strain 972 / ATCC 24843) (Fission yeast).